The following is a 100-amino-acid chain: Large ribosomal subunit protein bL21 (100 aa).

The protein belongs to the bacterial ribosomal protein bL21 family. In terms of assembly, part of the 50S ribosomal subunit. Contacts protein L20.

This protein binds to 23S rRNA in the presence of protein L20. This Ureaplasma urealyticum serovar 10 (strain ATCC 33699 / Western) protein is Large ribosomal subunit protein bL21.